The chain runs to 499 residues: Glycerol kinase (499 aa).

ADP is bound at residue Thr-13. Positions 13, 14, and 15 each coordinate ATP. Position 13 (Thr-13) interacts with sn-glycerol 3-phosphate. An ADP-binding site is contributed by Arg-17. Sn-glycerol 3-phosphate contacts are provided by Arg-83, Glu-84, Tyr-135, and Asp-245. Glycerol-binding residues include Arg-83, Glu-84, Tyr-135, Asp-245, and Gln-246. Thr-267 and Gly-310 together coordinate ADP. The ATP site is built by Thr-267, Gly-310, Gln-314, and Ala-411. ADP contacts are provided by Ala-411 and Asn-415.

The protein belongs to the FGGY kinase family.

The catalysed reaction is glycerol + ATP = sn-glycerol 3-phosphate + ADP + H(+). It functions in the pathway polyol metabolism; glycerol degradation via glycerol kinase pathway; sn-glycerol 3-phosphate from glycerol: step 1/1. Inhibited by fructose 1,6-bisphosphate (FBP). Key enzyme in the regulation of glycerol uptake and metabolism. Catalyzes the phosphorylation of glycerol to yield sn-glycerol 3-phosphate. This chain is Glycerol kinase, found in Xylella fastidiosa (strain M12).